The following is a 198-amino-acid chain: Ribonuclease HII (198 aa).

Residues 3 to 198 (FLEGGVDEAG…SWRTLRGESP (196 aa)) enclose the RNase H type-2 domain. Asp-9, Glu-10, and Asp-104 together coordinate a divalent metal cation.

Belongs to the RNase HII family. The cofactor is Mn(2+). Mg(2+) serves as cofactor.

The protein resides in the cytoplasm. It catalyses the reaction Endonucleolytic cleavage to 5'-phosphomonoester.. In terms of biological role, endonuclease that specifically degrades the RNA of RNA-DNA hybrids. The protein is Ribonuclease HII of Pyrobaculum neutrophilum (strain DSM 2338 / JCM 9278 / NBRC 100436 / V24Sta) (Thermoproteus neutrophilus).